The primary structure comprises 549 residues: Cation/acetate symporter ActP (549 aa).

Transmembrane regions (helical) follow at residues 33–53 (WQAIIMFLIFVVFTLGITYWA), 77–97 (LAIAGDYMSAASFLGISALVF), 103–123 (GLIYSLGFLVGWPIILFLIAE), 148–168 (ILSACGSLVVVALYLIAQMVG), 183–203 (IAVVLVGVLMMMYVLFGGMLA), 206–226 (WVQIIKAVLLLFGASFMAFMV), 262–282 (ISALSLGLGLMFGTAGLPHIL), 303–323 (GFMGYFYILTFIIGFGAIMLV), 355–375 (LFLGFISAVAFATILAVVAGL), 404–424 (VSKITVLILGVIAIILGVLFE), 428–448 (IAFMVGLAFAIAASCNFPIIL), 464–484 (GGWLGLITAVVLMILGPTIWV), and 493–513 (IFPYEYPALFSISVAFLGIWF).

The protein belongs to the sodium:solute symporter (SSF) (TC 2.A.21) family.

It localises to the cell inner membrane. Functionally, transports acetate. This Escherichia coli O6:K15:H31 (strain 536 / UPEC) protein is Cation/acetate symporter ActP.